The sequence spans 228 residues: Probable septum site-determining protein MinC (228 aa).

The protein belongs to the MinC family. In terms of assembly, interacts with MinD and FtsZ.

Its function is as follows. Cell division inhibitor that blocks the formation of polar Z ring septums. Rapidly oscillates between the poles of the cell to destabilize FtsZ filaments that have formed before they mature into polar Z rings. Prevents FtsZ polymerization. In Symbiobacterium thermophilum (strain DSM 24528 / JCM 14929 / IAM 14863 / T), this protein is Probable septum site-determining protein MinC.